Consider the following 574-residue polypeptide: Acyloxyacyl hydrolase (574 aa).

The signal sequence occupies residues 1-22; sequence MKFPWKVFKTTLLLLLLSHSLA. Positions 23–33 are excised as a propeptide; the sequence is SVPSEDQPGDS. The region spanning 36–117 is the Saposin B-type domain; that stretch reads HGQSCLGCVV…YALEFCKRGA (82 aa). Residues 37–69 form an important for enzyme activity, localization to cytoplasmic vesicles, and protein stability region; the sequence is GQSCLGCVVLVSVIEQLAEVHNSSVQVAMERLC. Disulfide bonds link cysteine 40–cysteine 113, cysteine 43–cysteine 107, cysteine 69–cysteine 82, cysteine 122–cysteine 452, cysteine 159–cysteine 168, cysteine 205–cysteine 229, cysteine 248–cysteine 328, and cysteine 375–cysteine 458. N-linked (GlcNAc...) asparagine glycosylation is present at asparagine 58. The lipopolysaccharide binding stretch occupies residues 172-176; the sequence is ELSIK. The Ca(2+) site is built by aspartate 183, aspartate 185, aspartate 187, histidine 189, aspartate 204, asparagine 206, aspartate 207, aspartate 209, valine 212, aspartate 222, aspartate 226, asparagine 228, asparagine 230, isoleucine 232, and glutamate 244. Asparagine 206 carries N-linked (GlcNAc...) asparagine glycosylation. Serine 262 is a catalytic residue. Residues asparagine 408 and asparagine 465 are each glycosylated (N-linked (GlcNAc...) asparagine).

As to quaternary structure, heterodimer of the large and small subunits; disulfide-linked. Ca(2+) is required as a cofactor. In terms of processing, cleaved into a large and a small subunit. Post-translationally, the small subunit is N-glycosylated. In terms of tissue distribution, detected in peritoneal macrophages (at protein level). Strongly expressed in kidney cortex, where it may be produced by proximal tubule cells. In liver, expressed at high levels in Kupffer cells. Expressed by dendritic cells. Detected at low levels in alveolar macrophages.

It is found in the secreted. The protein resides in the cytoplasmic vesicle. The enzyme catalyses a 3-(acyloxy)acyl derivative of bacterial toxin + H2O = a 3-hydroxyacyl derivative of bacterial toxin + a fatty acid + H(+). In terms of biological role, removes the secondary (acyloxyacyl-linked) fatty acyl chains from the lipid A region of bacterial lipopolysaccharides (LPS). By breaking down LPS, terminates the host response to bacterial infection and prevents prolonged and damaging inflammatory responses. In peritoneal macrophages, seems to be important for recovery from a state of immune tolerance following infection by Gram-negative bacteria. The chain is Acyloxyacyl hydrolase from Mus musculus (Mouse).